A 374-amino-acid polypeptide reads, in one-letter code: Cysteine-type anaerobic sulfatase-maturating enzyme (374 aa).

Positions 1-227 (MKSLSMLIKP…LNKLFDLWFK (227 aa)) constitute a Radical SAM core domain. Residues Cys15 and Cys19 each coordinate [4Fe-4S] cluster. S-adenosyl-L-methionine is bound at residue Tyr21. A [4Fe-4S] cluster-binding site is contributed by Cys22. S-adenosyl-L-methionine-binding residues include Gly66, Ser122, Arg134, and Leu195. The [4Fe-4S] cluster site is built by Cys255, Cys261, and Cys276. Asp277 (proton acceptor) is an active-site residue. Positions 317, 320, 326, 330, and 348 each coordinate [4Fe-4S] cluster.

The protein belongs to the radical SAM superfamily. Anaerobic sulfatase-maturating enzyme family. Requires [4Fe-4S] cluster as cofactor.

The catalysed reaction is L-cysteinyl-[sulfatase] + S-adenosyl-L-methionine + H2O = 3-oxo-L-alanyl-[sulfatase] + hydrogen sulfide + 5'-deoxyadenosine + L-methionine + 2 H(+). It participates in protein modification; sulfatase oxidation. Functionally, involved in 'Cys-type' sulfatase maturation under anaerobic conditions. Catalyzes the post-translational modification of cysteine into 3-oxoalanine (also known as C(alpha)-formylglycine (FGly)), by a free radical chemical mechanism initiated via the reductive cleavage of S-adenosyl-L-methionine (SAM). This Clostridium novyi (strain NT) protein is Cysteine-type anaerobic sulfatase-maturating enzyme.